Reading from the N-terminus, the 302-residue chain is D-alanine--D-alanine ligase B (302 aa).

Residues 99-294 (KKVLKAENIR…YSKFIDLIIE (196 aa)) form the ATP-grasp domain. Residue 126–181 (IEEIGYPVFVKPNNGGSSVATFKVYKKEDIKNSVMEGLKYDEEVIIESFIKGREIT) participates in ATP binding. Mg(2+) is bound by residues aspartate 248, glutamate 261, and asparagine 263.

This sequence belongs to the D-alanine--D-alanine ligase family. The cofactor is Mg(2+). Mn(2+) serves as cofactor.

The protein localises to the cytoplasm. It catalyses the reaction 2 D-alanine + ATP = D-alanyl-D-alanine + ADP + phosphate + H(+). It participates in cell wall biogenesis; peptidoglycan biosynthesis. In terms of biological role, cell wall formation. The sequence is that of D-alanine--D-alanine ligase B from Clostridium perfringens (strain 13 / Type A).